Reading from the N-terminus, the 65-residue chain is Gallinacin-1 alpha (65 aa).

The first 19 residues, 1 to 19 (MRIVYLLLPFILLLAQGAA), serve as a signal peptide directing secretion. Positions 20–25 (GSSQAL) are excised as a propeptide. 3 disulfides stabilise this stretch: C31/C59, C38/C53, and C43/C60.

The protein belongs to the beta-defensin family.

The protein localises to the secreted. Its subcellular location is the cytoplasmic granule. Its function is as follows. Has bactericidal activity. Potent activity against E.coli ML-35, L.monocytogenes EGD and C.albicans. The chain is Gallinacin-1 alpha from Gallus gallus (Chicken).